Consider the following 577-residue polypeptide: Proline--tRNA ligase (577 aa).

Belongs to the class-II aminoacyl-tRNA synthetase family. ProS type 1 subfamily. As to quaternary structure, homodimer.

It is found in the cytoplasm. It catalyses the reaction tRNA(Pro) + L-proline + ATP = L-prolyl-tRNA(Pro) + AMP + diphosphate. In terms of biological role, catalyzes the attachment of proline to tRNA(Pro) in a two-step reaction: proline is first activated by ATP to form Pro-AMP and then transferred to the acceptor end of tRNA(Pro). As ProRS can inadvertently accommodate and process non-cognate amino acids such as alanine and cysteine, to avoid such errors it has two additional distinct editing activities against alanine. One activity is designated as 'pretransfer' editing and involves the tRNA(Pro)-independent hydrolysis of activated Ala-AMP. The other activity is designated 'posttransfer' editing and involves deacylation of mischarged Ala-tRNA(Pro). The misacylated Cys-tRNA(Pro) is not edited by ProRS. This Chlamydia caviae (strain ATCC VR-813 / DSM 19441 / 03DC25 / GPIC) (Chlamydophila caviae) protein is Proline--tRNA ligase.